Reading from the N-terminus, the 63-residue chain is Large ribosomal subunit protein bL28 (63 aa).

It belongs to the bacterial ribosomal protein bL28 family.

This Clostridium perfringens (strain SM101 / Type A) protein is Large ribosomal subunit protein bL28.